Reading from the N-terminus, the 35-residue chain is Cecropin-A (35 aa).

L35 carries the leucine amide modification.

In terms of assembly, monomer. In terms of tissue distribution, hemolymph.

The protein localises to the secreted. Functionally, cecropins have lytic and antibacterial activity against several Gram-positive and Gram-negative bacteria. Also has activity against fungi. This is Cecropin-A from Heliothis virescens (Tobacco budworm moth).